The sequence spans 338 residues: Ketol-acid reductoisomerase (NADP(+)) (338 aa).

Residues 1–181 (MKVYYDKDAD…GGTKGGVIET (181 aa)) enclose the KARI N-terminal Rossmann domain. Residues 24-27 (YGSQ), arginine 47, and serine 52 each bind NADP(+). Residue histidine 107 is part of the active site. Residue glycine 133 participates in NADP(+) binding. Residues 182–327 (NFKEETETDL…GQLRDMMPWI (146 aa)) form the KARI C-terminal knotted domain. Mg(2+)-binding residues include aspartate 190, glutamate 194, glutamate 226, and glutamate 230. Serine 251 contacts substrate.

Belongs to the ketol-acid reductoisomerase family. Mg(2+) is required as a cofactor.

The enzyme catalyses (2R)-2,3-dihydroxy-3-methylbutanoate + NADP(+) = (2S)-2-acetolactate + NADPH + H(+). It catalyses the reaction (2R,3R)-2,3-dihydroxy-3-methylpentanoate + NADP(+) = (S)-2-ethyl-2-hydroxy-3-oxobutanoate + NADPH + H(+). The protein operates within amino-acid biosynthesis; L-isoleucine biosynthesis; L-isoleucine from 2-oxobutanoate: step 2/4. It functions in the pathway amino-acid biosynthesis; L-valine biosynthesis; L-valine from pyruvate: step 2/4. Its function is as follows. Involved in the biosynthesis of branched-chain amino acids (BCAA). Catalyzes an alkyl-migration followed by a ketol-acid reduction of (S)-2-acetolactate (S2AL) to yield (R)-2,3-dihydroxy-isovalerate. In the isomerase reaction, S2AL is rearranged via a Mg-dependent methyl migration to produce 3-hydroxy-3-methyl-2-ketobutyrate (HMKB). In the reductase reaction, this 2-ketoacid undergoes a metal-dependent reduction by NADPH to yield (R)-2,3-dihydroxy-isovalerate. The protein is Ketol-acid reductoisomerase (NADP(+)) of Azoarcus sp. (strain BH72).